Consider the following 343-residue polypeptide: Aspartate beta-hydroxylase domain-containing protein 2 (343 aa).

Topologically, residues 1-31 are cytoplasmic; the sequence is MWLEWLVAWSWSLDGLRDCIATGIQSVRDCD. A helical membrane pass occupies residues 32-52; it reads GTAVITVACLLILFVWYCYHV. The Lumenal portion of the chain corresponds to 53-343; that stretch reads GREQPRPHVS…ALDFIFAPGR (291 aa). Asparagine 77 and asparagine 185 each carry an N-linked (GlcNAc...) asparagine glycan. 2 residues coordinate 2-oxoglutarate: tryptophan 202 and serine 246. Residue histidine 257 participates in Fe cation binding. 2-oxoglutarate is bound at residue 266-268; it reads RCH. Histidine 302 is a binding site for Fe cation. Position 315 (arginine 315) interacts with 2-oxoglutarate.

This sequence belongs to the aspartyl/asparaginyl beta-hydroxylase family. Fe cation serves as cofactor.

The protein resides in the membrane. Functionally, may function as 2-oxoglutarate-dependent dioxygenase. In Mus musculus (Mouse), this protein is Aspartate beta-hydroxylase domain-containing protein 2 (Asphd2).